The following is a 118-amino-acid chain: Na(+)/H(+) antiporter subunit G1 (118 aa).

Transmembrane regions (helical) follow at residues 9-29 (LAVI…IGII), 47-67 (LGAI…DGYI), and 69-89 (MQLI…SHLI).

The protein belongs to the CPA3 antiporters (TC 2.A.63) subunit G family. In terms of assembly, may form a heterooligomeric complex that consists of seven subunits: mnhA1, mnhB1, mnhC1, mnhD1, mnhE1, mnhF1 and mnhG1.

The protein resides in the cell membrane. Functionally, mnh complex is a Na(+)/H(+) antiporter involved in Na(+) excretion. This Staphylococcus haemolyticus (strain JCSC1435) protein is Na(+)/H(+) antiporter subunit G1 (mnhG1).